The sequence spans 96 residues: Phosphoribosyl-ATP pyrophosphatase (96 aa).

It belongs to the PRA-PH family.

The protein resides in the cytoplasm. The enzyme catalyses 1-(5-phospho-beta-D-ribosyl)-ATP + H2O = 1-(5-phospho-beta-D-ribosyl)-5'-AMP + diphosphate + H(+). It functions in the pathway amino-acid biosynthesis; L-histidine biosynthesis; L-histidine from 5-phospho-alpha-D-ribose 1-diphosphate: step 2/9. In Methanococcus maripaludis (strain C6 / ATCC BAA-1332), this protein is Phosphoribosyl-ATP pyrophosphatase.